Consider the following 1031-residue polypeptide: Zinc finger protein 445 (1031 aa).

Positions 1–43 (MPPGRWHAAYPAQAQSSRERGRLQTVKKEEEDESYTPVQAARP) are disordered. Residues 17–29 (SRERGRLQTVKKE) are compositionally biased toward basic and acidic residues. K28 is covalently cross-linked (Glycyl lysine isopeptide (Lys-Gly) (interchain with G-Cter in SUMO1)). The SCAN box domain occupies 55–137 (RQLFRQLRYH…ALLEELQRDL (83 aa)). Residues 234-304 (MTFKDVEVTF…NMQAAQPKGN (71 aa)) form the KRAB domain. Glycyl lysine isopeptide (Lys-Gly) (interchain with G-Cter in SUMO2) cross-links involve residues K317, K374, K375, and K399. 3 consecutive C2H2-type zinc fingers follow at residues 485–507 (FKCS…QRLH), 513–535 (FKCR…EKIH), and 541–563 (YKCD…RETH). Residue K567 forms a Glycyl lysine isopeptide (Lys-Gly) (interchain with G-Cter in SUMO2) linkage. C2H2-type zinc fingers lie at residues 597–619 (FDCS…QRIH) and 625–647 (YKCT…MRLH). A Glycyl lysine isopeptide (Lys-Gly) (interchain with G-Cter in SUMO2) cross-link involves residue K654. 2 C2H2-type zinc fingers span residues 681–703 (FLCQ…QRIH) and 709–731 (YQCS…KKKH). Glycyl lysine isopeptide (Lys-Gly) (interchain with G-Cter in SUMO2) cross-links involve residues K736 and K758. C2H2-type zinc fingers lie at residues 762–784 (YKCS…QRVH), 790–812 (YKCR…QRIH), 840–862 (FWCQ…KGIH), 868–890 (YKCN…QRIH), and 896–918 (FKCQ…QRKH). Residues 911–939 (LSSHQRKHTRAAQAERSPPARSSSQDTKL) are disordered. Residues K938, K956, and K975 each participate in a glycyl lysine isopeptide (Lys-Gly) (interchain with G-Cter in SUMO2) cross-link. 2 consecutive C2H2-type zinc fingers follow at residues 978 to 1000 (HKCS…KRFH) and 1006 to 1028 (FKCS…MKNH).

The protein belongs to the krueppel C2H2-type zinc-finger protein family.

It localises to the nucleus. Transcription regulator required to maintain maternal and paternal gene imprinting, a process by which gene expression is restricted in a parent of origin-specific manner by epigenetic modification of genomic DNA and chromatin, including DNA methylation. Acts by controlling DNA methylation during the earliest multicellular stages of development at multiple imprinting control regions (ICRs). Acts together with ZFP57, but seems to be the major factor in human early embryonic imprinting maintenance. In contrast, in mice, ZFP57 plays the predominant role in imprinting maintenance. In Homo sapiens (Human), this protein is Zinc finger protein 445.